Consider the following 426-residue polypeptide: D-cysteine desulfhydrase 1, mitochondrial (426 aa).

Residues 1–63 (MARGAHQAPG…IGSFLSKRPY (63 aa)) constitute a mitochondrion transit peptide. Lys-119 carries the N6-(pyridoxal phosphate)lysine modification. The active-site Nucleophile is Ser-146.

It belongs to the ACC deaminase/D-cysteine desulfhydrase family. Homodimer. It depends on pyridoxal 5'-phosphate as a cofactor. As to expression, present in seeds (at protein level).

It localises to the mitochondrion. The catalysed reaction is D-cysteine + H2O = hydrogen sulfide + pyruvate + NH4(+) + H(+). Inhibited by L-cysteine (L-cys). Its function is as follows. Catalyzes the production of hydrogen sulfide (H2S) from D-cysteine (D-cys). The sequence is that of D-cysteine desulfhydrase 1, mitochondrial from Oryza sativa subsp. japonica (Rice).